A 446-amino-acid polypeptide reads, in one-letter code: Glutamine synthetase (446 aa).

The 86-residue stretch at 18 to 103 (ENVRYLRLQF…LICDVYKTDG (86 aa)) folds into the GS beta-grasp domain. In terms of domain architecture, GS catalytic spans 110–446 (PRANLKRVLK…WERDQYMKQY (337 aa)). Residues Glu-134 and Glu-136 each contribute to the Mg(2+) site. Glu-186 contacts ATP. Residues Glu-191 and Glu-198 each contribute to the Mg(2+) site. L-glutamate is bound by residues 242 to 243 (NG) and Gly-243. Mg(2+) is bound at residue His-247. Residue Ser-251 participates in ATP binding. L-glutamate contacts are provided by Arg-300, Glu-306, and Arg-318. ATP contacts are provided by Arg-318 and Arg-323. Mg(2+) is bound at residue Glu-335. L-glutamate is bound at residue Arg-337.

It belongs to the glutamine synthetase family. In terms of assembly, oligomer of 12 subunits arranged in the form of two hexagons. In its feedback-inhibited form, interacts with TnrA in order to block its DNA-binding activity. The cofactor is Mg(2+).

Its subcellular location is the cytoplasm. The catalysed reaction is L-glutamate + NH4(+) + ATP = L-glutamine + ADP + phosphate + H(+). Its activity is regulated as follows. Inhibited by glutamine. In terms of biological role, glutamine synthetase (GS) is an unusual multitasking protein that functions as an enzyme, a transcription coregulator, and a chaperone in ammonium assimilation and in the regulation of genes involved in nitrogen metabolism. It catalyzes the ATP-dependent biosynthesis of glutamine from glutamate and ammonia. Feedback-inhibited GlnA also interacts with and regulates the activity of the transcriptional regulator TnrA. During nitrogen limitation, TnrA is in its DNA-binding active state and turns on the transcription of genes required for nitrogen assimilation. Under conditions of nitrogen excess, feedback-inhibited GlnA forms a stable complex with TnrA, which inhibits its DNA-binding activity. In contrast, feedback-inhibited GlnA acts as a chaperone to stabilize the DNA-binding activity of GlnR, which represses the transcription of nitrogen assimilation genes. This chain is Glutamine synthetase, found in Staphylococcus aureus (strain MRSA252).